Reading from the N-terminus, the 436-residue chain is Ribosomal protein uS12 methylthiotransferase RimO (436 aa).

Residues 2 to 117 (RNVGIISLGC…IVDVIEEVKK (116 aa)) form the MTTase N-terminal domain. 6 residues coordinate [4Fe-4S] cluster: Cys11, Cys47, Cys80, Cys154, Cys158, and Cys161. A Radical SAM core domain is found at 140-369 (TTPPYYAYLK…MEIQKQISYE (230 aa)). The 65-residue stretch at 372-436 (MSKIGTKLEV…AFEYDLVGEY (65 aa)) folds into the TRAM domain.

The protein belongs to the methylthiotransferase family. RimO subfamily. The cofactor is [4Fe-4S] cluster.

The protein localises to the cytoplasm. It catalyses the reaction L-aspartate(89)-[ribosomal protein uS12]-hydrogen + (sulfur carrier)-SH + AH2 + 2 S-adenosyl-L-methionine = 3-methylsulfanyl-L-aspartate(89)-[ribosomal protein uS12]-hydrogen + (sulfur carrier)-H + 5'-deoxyadenosine + L-methionine + A + S-adenosyl-L-homocysteine + 2 H(+). Its function is as follows. Catalyzes the methylthiolation of an aspartic acid residue of ribosomal protein uS12. The sequence is that of Ribosomal protein uS12 methylthiotransferase RimO from Caldanaerobacter subterraneus subsp. tengcongensis (strain DSM 15242 / JCM 11007 / NBRC 100824 / MB4) (Thermoanaerobacter tengcongensis).